The chain runs to 272 residues: 3-methyl-2-oxobutanoate hydroxymethyltransferase (272 aa).

2 residues coordinate Mg(2+): aspartate 54 and aspartate 93. Residues 54–55 (DS), aspartate 93, and lysine 121 contribute to the 3-methyl-2-oxobutanoate site. Glutamate 123 contributes to the Mg(2+) binding site. The active-site Proton acceptor is the glutamate 190.

Belongs to the PanB family. Homodecamer; pentamer of dimers. Requires Mg(2+) as cofactor.

It localises to the cytoplasm. The catalysed reaction is 3-methyl-2-oxobutanoate + (6R)-5,10-methylene-5,6,7,8-tetrahydrofolate + H2O = 2-dehydropantoate + (6S)-5,6,7,8-tetrahydrofolate. Its pathway is cofactor biosynthesis; (R)-pantothenate biosynthesis; (R)-pantoate from 3-methyl-2-oxobutanoate: step 1/2. Catalyzes the reversible reaction in which hydroxymethyl group from 5,10-methylenetetrahydrofolate is transferred onto alpha-ketoisovalerate to form ketopantoate. This is 3-methyl-2-oxobutanoate hydroxymethyltransferase from Janthinobacterium sp. (strain Marseille) (Minibacterium massiliensis).